We begin with the raw amino-acid sequence, 831 residues long: Protein translocase subunit SecA (831 aa).

ATP contacts are provided by residues Gln-88, 106 to 110, and Asp-495; that span reads GEGKT. 4 residues coordinate Zn(2+): Cys-816, Cys-818, Cys-827, and Cys-828.

This sequence belongs to the SecA family. Monomer and homodimer. Part of the essential Sec protein translocation apparatus which comprises SecA, SecYEG and auxiliary proteins SecDF-YajC and YidC. It depends on Zn(2+) as a cofactor.

The protein localises to the cell membrane. It localises to the cytoplasm. It catalyses the reaction ATP + H2O + cellular proteinSide 1 = ADP + phosphate + cellular proteinSide 2.. Functionally, part of the Sec protein translocase complex. Interacts with the SecYEG preprotein conducting channel. Has a central role in coupling the hydrolysis of ATP to the transfer of proteins into and across the cell membrane, serving as an ATP-driven molecular motor driving the stepwise translocation of polypeptide chains across the membrane. This is Protein translocase subunit SecA from Lawsonia intracellularis (strain PHE/MN1-00).